The following is a 46-amino-acid chain: Protein PsbN (46 aa).

The helical transmembrane segment at 10 to 30 (VAIAVLAALLGLTGFGVYTAF) threads the bilayer.

This sequence belongs to the PsbN family.

The protein localises to the cellular thylakoid membrane. May play a role in photosystem I and II biogenesis. The chain is Protein PsbN from Synechococcus sp. (strain WH7803).